Consider the following 230-residue polypeptide: Sugar fermentation stimulation protein homolog (230 aa).

This sequence belongs to the SfsA family.

The sequence is that of Sugar fermentation stimulation protein homolog from Clostridium botulinum (strain ATCC 19397 / Type A).